Reading from the N-terminus, the 888-residue chain is Autophagy-related protein 9 (888 aa).

The segment at 1–170 (MASNIFSRIK…PYTTPMGPQP (170 aa)) is disordered. At 1-255 (MASNIFSRIK…CTRKMSGLWN (255 aa)) the chain is on the cytoplasmic side. Polar residues predominate over residues 13-24 (SGGSQSFYQQLR). Acidic residues predominate over residues 28–38 (DPEYDPGLDEE). Positions 123 to 143 (RATNPGSSRTPASVGPSSART) are enriched in polar residues. Residues 256-276 (FAIWLYTFFFIWKCVQYFVEI) form a helical membrane-spanning segment. Residues 277 to 422 (RRLTYIRDFY…RLLSQKLRQR (146 aa)) are Lumenal-facing. The chain crosses the membrane as a helical span at residues 423-443 (FLFAGFLNLLFAPVVLAYVVI). Residues 444-511 (VYFFTYYYEY…PKRITEAVAR (68 aa)) are Cytoplasmic-facing. The stretch at 512–532 (TIAFMSGAITAILAIGSVLDS) is an intramembrane region. The Cytoplasmic segment spans residues 533-544 (ELFLNFEITKDR). The chain crosses the membrane as a helical span at residues 545–565 (PVIFYLGVFAAIWATTRGMVS). Topologically, residues 566-611 (EETLVFNPEYALRNVIEYTRYVPDHWKNKLHSSEVKQEFSELYKMK) are lumenal. The chain crosses the membrane as a helical span at residues 612-632 (VVIFLEEMMGIVTTPMLLLFS). Residues 633–642 (LPRCSDQIVD) are Cytoplasmic-facing. Residues 643–663 (FFREFTIHVDGLGYVCSFAVF) lie within the membrane without spanning it. The Cytoplasmic segment spans residues 664 to 888 (DFQKGPGNTG…QRPRRGGGMV (225 aa)). Disordered regions lie at residues 748-770 (GRTG…PRIG) and 834-866 (EPGG…DPEA).

Belongs to the ATG9 family. Homotrimer; forms a homotrimer with a central pore that forms a path between the two membrane leaflets. In terms of processing, phosphorylated by ATG1. ATG1 phosphorylation is required for ATG18 interaction and preautophagosome elongation.

It localises to the preautophagosomal structure membrane. The protein resides in the cytoplasmic vesicle membrane. The protein localises to the golgi apparatus membrane. Its subcellular location is the endoplasmic reticulum membrane. It catalyses the reaction a 1,2-diacyl-sn-glycero-3-phosphocholine(in) = a 1,2-diacyl-sn-glycero-3-phosphocholine(out). It carries out the reaction a 1,2-diacyl-sn-glycero-3-phospho-L-serine(in) = a 1,2-diacyl-sn-glycero-3-phospho-L-serine(out). The enzyme catalyses a 1,2-diacyl-sn-glycero-3-phosphoethanolamine(in) = a 1,2-diacyl-sn-glycero-3-phosphoethanolamine(out). The catalysed reaction is a 1,2-diacyl-sn-glycero-3-phospho-(1D-myo-inositol-3-phosphate)(in) = a 1,2-diacyl-sn-glycero-3-phospho-(1D-myo-inositol-3-phosphate)(out). Functionally, phospholipid scramblase involved in autophagy and cytoplasm to vacuole transport (Cvt) vesicle formation. Cycles between the preautophagosomal structure/phagophore assembly site (PAS) and the cytoplasmic vesicle pool and supplies membrane for the growing autophagosome. Lipid scramblase activity plays a key role in preautophagosomal structure/phagophore assembly by distributing the phospholipids that arrive through ATG2 from the cytoplasmic to the luminal leaflet of the bilayer, thereby driving autophagosomal membrane expansion. Required for mitophagy. Also involved in endoplasmic reticulum-specific autophagic process and is essential for the survival of cells subjected to severe ER stress. Different machineries are required for anterograde trafficking to the PAS during either the Cvt pathway or bulk autophagy and for retrograde trafficking. Autophagy is required for proper vegetative growth, asexual/sexual reproduction, and full virulence. Autophagy is particularly involved in the biosynthesis of deoxynivalenol (DON), an important virulence determinant. Required for aerial hyphae development and lipid droplet degradation in response to starvation. The polypeptide is Autophagy-related protein 9 (Gibberella zeae (strain ATCC MYA-4620 / CBS 123657 / FGSC 9075 / NRRL 31084 / PH-1) (Wheat head blight fungus)).